The sequence spans 349 residues: tRNA pseudouridine synthase D (349 aa).

Phe-26 is a binding site for substrate. The active-site Nucleophile is the Asp-79. Residue Asn-128 coordinates substrate. The TRUD domain occupies 154-302 (GVPNYFGSQR…VEGSRRAVLL (149 aa)). Phe-328 contributes to the substrate binding site.

This sequence belongs to the pseudouridine synthase TruD family.

The enzyme catalyses uridine(13) in tRNA = pseudouridine(13) in tRNA. Functionally, responsible for synthesis of pseudouridine from uracil-13 in transfer RNAs. This Yersinia pseudotuberculosis serotype O:1b (strain IP 31758) protein is tRNA pseudouridine synthase D.